The primary structure comprises 863 residues: Ribosomal protein S6 kinase alpha-5 (863 aa).

Residues 1 to 21 (MEGEGGGSGGAGTSGDSGDGG) are compositionally biased toward gly residues. The segment at 1–22 (MEGEGGGSGGAGTSGDSGDGGE) is disordered. Residues 48–317 (FELLKVLGTG…AEEIKEHLFF (270 aa)) form the Protein kinase 1 domain. ATP contacts are provided by residues 54-62 (LGTGAYGKV) and Lys80. The Proton acceptor role is filled by Asp176. Residue Ser211 is modified to Phosphoserine; by autocatalysis. The AGC-kinase C-terminal domain maps to 318–386 (EKIKWDDLAA…VAPSILFKRN (69 aa)). Phosphoserine; by MAPK1, MAPK3 and MAPK14 is present on Ser359. Phosphoserine; by autocatalysis is present on residues Ser375 and Ser380. A Protein kinase 2 domain is found at 428-675 (DKPLGEGSFS…SCDLWSLGVI (248 aa)). ATP-binding positions include 431–440 (LGEGSFSICR) and Lys454. The active-site Proton acceptor is the Asp608. At Thr645 the chain carries Phosphothreonine; by MAPK1, MAPK3 and MAPK14. Ser711, Ser721, Ser755, and Ser759 each carry phosphoserine. A Phosphothreonine modification is found at Thr764. The tract at residues 805–863 (AKRRKMKRTSTSTETRSSSSESSRSSSSQSHGKTTPTKTLQPSNPTEGSNPDTLFQFSD) is disordered. The segment covering 813 to 832 (TSTSTETRSSSSESSRSSSS) has biased composition (low complexity). Phosphoserine; by autocatalysis occurs at positions 814, 816, and 822. Polar residues predominate over residues 833–863 (QSHGKTTPTKTLQPSNPTEGSNPDTLFQFSD). Ser862 carries the phosphoserine modification.

This sequence belongs to the protein kinase superfamily. AGC Ser/Thr protein kinase family. S6 kinase subfamily. Forms a complex with either MAPK1/ERK2 or MAPK3/ERK1 in quiescent cells which transiently dissociates following mitogenic stimulation. Also associates with MAPK14/p38-alpha. Activated RPS6KA5 associates with and phosphorylates the NF-kappa-B p65 subunit RELA. Interacts with CREBBP and EP300. Requires Mg(2+) as cofactor. Ser-375 and Thr-645 phosphorylation is required for kinase activity. Ser-375 and Ser-211 are autophosphorylated by the C-terminal kinase domain, and their phosphorylation is essential for the catalytic activity of the N-terminal kinase domain. Phosphorylated at Ser-359, Thr-645 and Thr-764 by MAPK1/ERK2, MAPK3/ERK1 and MAPK14/p38-alpha. Autophosphorylated at Ser-814, Ser-816 and Ser-822 by the N-terminal kinase domain. In terms of processing, ubiquitinated.

The protein resides in the nucleus. It carries out the reaction L-seryl-[protein] + ATP = O-phospho-L-seryl-[protein] + ADP + H(+). The enzyme catalyses L-threonyl-[protein] + ATP = O-phospho-L-threonyl-[protein] + ADP + H(+). Activated by phosphorylation at Ser-359, Thr-645 and Thr-764 by MAPK1/ERK2, MAPK3/ERK1 and MAPK14/p38-alpha, and by further autophosphorylation of Ser-211, Ser-375 and Ser-380 by the activated C-terminal kinase domain. The active N-terminal kinase domain finally phosphorylates downstream substrates, as well as Ser-814, Ser-816 and Ser-822 in its own C-terminal region. Serine/threonine-protein kinase that is required for the mitogen or stress-induced phosphorylation of the transcription factors CREB1 and ATF1 and for the regulation of the transcription factors RELA, STAT3 and ETV1/ER81, and that contributes to gene activation by histone phosphorylation and functions in the regulation of inflammatory genes. Phosphorylates CREB1 and ATF1 in response to mitogenic or stress stimuli such as UV-C irradiation, epidermal growth factor (EGF) and anisomycin. Plays an essential role in the control of RELA transcriptional activity in response to TNF and upon glucocorticoid, associates in the cytoplasm with the glucocorticoid receptor NR3C1 and contributes to RELA inhibition and repression of inflammatory gene expression. In skeletal myoblasts is required for phosphorylation of RELA at 'Ser-276' during oxidative stress. In erythropoietin-stimulated cells, is necessary for the 'Ser-727' phosphorylation of STAT3 and regulation of its transcriptional potential. Phosphorylates ETV1/ER81 at 'Ser-191' and 'Ser-216', and thereby regulates its ability to stimulate transcription, which may be important during development and breast tumor formation. Directly represses transcription via phosphorylation of 'Ser-1' of histone H2A. Phosphorylates 'Ser-10' of histone H3 in response to mitogenics, stress stimuli and EGF, which results in the transcriptional activation of several immediate early genes, including proto-oncogenes c-fos/FOS and c-jun/JUN. May also phosphorylate 'Ser-28' of histone H3. Mediates the mitogen- and stress-induced phosphorylation of high mobility group protein 1 (HMGN1/HMG14). In lipopolysaccharide-stimulated primary macrophages, acts downstream of the Toll-like receptor TLR4 to limit the production of pro-inflammatory cytokines. Functions probably by inducing transcription of the MAP kinase phosphatase DUSP1 and the anti-inflammatory cytokine interleukin 10 (IL10), via CREB1 and ATF1 transcription factors. Plays a role in neuronal cell death by mediating the downstream effects of excitotoxic injury. Phosphorylates TRIM7 at 'Ser-106' in response to growth factor signaling via the MEK/ERK pathway, thereby stimulating its ubiquitin ligase activity. The protein is Ribosomal protein S6 kinase alpha-5 (Rps6ka5) of Mus musculus (Mouse).